The sequence spans 224 residues: Thymidylate kinase (224 aa).

G13–S20 contributes to the ATP binding site.

The protein belongs to the thymidylate kinase family.

It catalyses the reaction dTMP + ATP = dTDP + ADP. Phosphorylation of dTMP to form dTDP in both de novo and salvage pathways of dTTP synthesis. The sequence is that of Thymidylate kinase from Agrobacterium fabrum (strain C58 / ATCC 33970) (Agrobacterium tumefaciens (strain C58)).